The chain runs to 970 residues: Type III restriction-modification enzyme EcoPI Res subunit (970 aa).

Residues 75–540 (ARSNVIDVSM…EVGRGLRLPV (466 aa)) form a helicase-like domain region. An endonuclease domain region spans residues 894-918 (TYSPDFAYVVKTAEGDYLNFIIETK).

Belongs to the type III restriction-modification system Res protein family. In terms of assembly, a heterotetramer with stoichiometry Res(2)Mod(2). It depends on Mg(2+) as a cofactor. Requires S-adenosyl-L-methionine as cofactor.

It catalyses the reaction Endonucleolytic cleavage of DNA to give specific double-stranded fragments with terminal 5'-phosphates.. A type III restriction enzyme that recognizes 2 inversely oriented double-stranded sequences 5'-AGACC-3' and cleaves DNA 25-27 base pairs downstream of one site, producing a single-strand 5' protrusion of two nucleotides. DNA restriction requires both the Res and Mod subunits. DNA topology affects its action; relaxed and negatively supercoiled DNA are digested but positively supercoiled DNA is not a good substrate. After binding to one recognition site undergoes random one-dimensional diffusion along DNA until it collides with a stationary enzyme bound to the second DNA site, which is when DNA cleavage occurs. The protein is Type III restriction-modification enzyme EcoPI Res subunit of Enterobacteriaceae (Bacteriophage P1).